Consider the following 436-residue polypeptide: Glutamyl-tRNA reductase (436 aa).

Residues Thr49–Arg52, Ser109, Glu114–Gln116, and Gln120 each bind substrate. Cys50 (nucleophile) is an active-site residue. Residue Gly198 to Ser203 participates in NADP(+) binding.

Belongs to the glutamyl-tRNA reductase family. In terms of assembly, homodimer.

It catalyses the reaction (S)-4-amino-5-oxopentanoate + tRNA(Glu) + NADP(+) = L-glutamyl-tRNA(Glu) + NADPH + H(+). Its pathway is porphyrin-containing compound metabolism; protoporphyrin-IX biosynthesis; 5-aminolevulinate from L-glutamyl-tRNA(Glu): step 1/2. The protein operates within porphyrin-containing compound metabolism; chlorophyll biosynthesis. Catalyzes the NADPH-dependent reduction of glutamyl-tRNA(Glu) to glutamate 1-semialdehyde (GSA). The sequence is that of Glutamyl-tRNA reductase from Prochlorococcus marinus (strain AS9601).